We begin with the raw amino-acid sequence, 822 residues long: Penicillin-binding protein 1A (822 aa).

Topologically, residues Met-1–Lys-5 are cytoplasmic. The helical; Signal-anchor for type II membrane protein transmembrane segment at Phe-6 to Tyr-26 threads the bilayer. Residues Leu-27 to Phe-822 lie on the Periplasmic side of the membrane. The segment at Leu-48–Thr-216 is transglycosylase. Glu-86 serves as the catalytic Proton donor; for transglycosylase activity. Residues Ile-403–Arg-744 form a transpeptidase region. The active-site Acyl-ester intermediate; for transpeptidase activity is the Ser-461. 2 disordered regions span residues Ala-614–Thr-654 and Lys-790–Phe-822. Residues Pro-812–Phe-822 are compositionally biased toward acidic residues.

It in the N-terminal section; belongs to the glycosyltransferase 51 family. This sequence in the C-terminal section; belongs to the transpeptidase family.

Its subcellular location is the cell inner membrane. The enzyme catalyses [GlcNAc-(1-&gt;4)-Mur2Ac(oyl-L-Ala-gamma-D-Glu-L-Lys-D-Ala-D-Ala)](n)-di-trans,octa-cis-undecaprenyl diphosphate + beta-D-GlcNAc-(1-&gt;4)-Mur2Ac(oyl-L-Ala-gamma-D-Glu-L-Lys-D-Ala-D-Ala)-di-trans,octa-cis-undecaprenyl diphosphate = [GlcNAc-(1-&gt;4)-Mur2Ac(oyl-L-Ala-gamma-D-Glu-L-Lys-D-Ala-D-Ala)](n+1)-di-trans,octa-cis-undecaprenyl diphosphate + di-trans,octa-cis-undecaprenyl diphosphate + H(+). The catalysed reaction is Preferential cleavage: (Ac)2-L-Lys-D-Ala-|-D-Ala. Also transpeptidation of peptidyl-alanyl moieties that are N-acyl substituents of D-alanine.. Its pathway is cell wall biogenesis; peptidoglycan biosynthesis. Cell wall formation. Synthesis of cross-linked peptidoglycan from the lipid intermediates. The enzyme has a penicillin-insensitive transglycosylase N-terminal domain (formation of linear glycan strands) and a penicillin-sensitive transpeptidase C-terminal domain (cross-linking of the peptide subunits). The protein is Penicillin-binding protein 1A (mrcA) of Pseudomonas aeruginosa (strain ATCC 15692 / DSM 22644 / CIP 104116 / JCM 14847 / LMG 12228 / 1C / PRS 101 / PAO1).